The sequence spans 195 residues: Cbp/p300-interacting transactivator 1 (195 aa).

Disordered stretches follow at residues 1–24 and 51–149; these read MPTM…NANP and ASNG…SPAI. The span at 54-78 shows a compositional bias: low complexity; that stretch reads GTKASGAPTSSSGSPSPISSSTATP. Residues 97–106 show a composition bias toward polar residues; sequence MQLQKLNSQY. The segment covering 137–148 has biased composition (low complexity); sequence SLSPSAGAQSPA. The short motif at 160-169 is the Nuclear export signal element; the sequence is LMSLVVELGL.

It belongs to the CITED family. Interacts (via C-terminus) with CREBBP. Interacts with EGR2. Homodimer. Binds to RBM14. Interacts (via N-terminus) with HSPA8; the interaction suppresses the association of CITED1 with p300/CBP and SMAD-mediated transcription transactivation. Interacts (via C-terminus) with TOX3 (via HGM box); the interaction increases estrogen-response element (ERE)-dependent transcription and protection against cell death. Interacts with ESR1; the interaction occurs in a estrogen-dependent manner. Interacts (unphosphorylated form preferentially and via C-terminus) with EP300. Phosphorylated. Phosphorylation changes in a cell cycle-dependent manner and reduces its transcriptional cofactor activity.

Its subcellular location is the nucleus. It localises to the cytoplasm. Functionally, transcriptional coactivator of the p300/CBP-mediated transcription complex. Enhances SMAD-mediated transcription by strengthening the functional link between the DNA-binding SMAD transcription factors and the p300/CBP transcription coactivator complex. Stimulates estrogen-dependent transactivation activity mediated by estrogen receptors signaling; stabilizes the interaction of estrogen receptor ESR1 and histone acetyltransferase EP300. Positively regulates TGF-beta signaling through its association with the SMAD/p300/CBP-mediated transcriptional coactivator complex. Induces transcription from estrogen-responsive promoters and protection against cell death. Potentiates EGR2-mediated transcriptional activation activity from the ERBB2 promoter. Acts as an inhibitor of osteoblastic mineralization through a cAMP-dependent parathyroid hormone receptor signaling. May play a role in pigmentation of melanocytes. Associates with chromatin to the estrogen-responsive TGF-alpha promoter region in a estrogen-dependent manner. This is Cbp/p300-interacting transactivator 1 (CITED1) from Bos taurus (Bovine).